A 420-amino-acid chain; its full sequence is Nucleoprotein (420 aa).

Composition is skewed to polar residues over residues 1–11 (MSDNGPQNQRS) and 21–30 (SDSTDNNQDG). Residues 1 to 49 (MSDNGPQNQRSAPRITFGGPSDSTDNNQDGGRSGARPKQRRPQGLPNNT) are disordered. The RNA-binding stretch occupies residues 41 to 186 (RPQGLPNNTA…RGGSQASSRS (146 aa)). Residues 48-175 (NTASWFTALT…TLPKGFYAEG (128 aa)) form the CoV N NTD domain. 3 residues coordinate RNA: Arg-92, Arg-107, and Arg-149. Disordered stretches follow at residues 168-214 (PKGF…ASGS), 233-286 (KVSG…QGNF), and 362-420 (AFPP…STQA). A Phosphoserine; by host modification is found at Ser-176. Low complexity-rich tracts occupy residues 179-206 (GSQASSRSSSRSRGNSRNSTPGSSRGNS) and 233-249 (KVSGKGQQQQGQTVTKK). The CoV N CTD domain occupies 247–364 (TKKSAAEASK…KHIDAYKAFP (118 aa)). The segment at 258–361 (PRQKRTATKS…LLNKHIDAYK (104 aa)) is dimerization. The segment covering 367–378 (EPKKDKKKKTDE) has biased composition (basic and acidic residues). The span at 404-420 (RQLQNSMSGASADSTQA) shows a compositional bias: polar residues.

It belongs to the betacoronavirus nucleocapsid protein family. In terms of assembly, homooligomer. Both monomeric and oligomeric forms interact with RNA. Interacts with protein M. Interacts with NSP3; this interaction serves to tether the genome to the newly translated replicase-transcriptase complex at a very early stage of infection. In terms of processing, ADP-ribosylated. The ADP-ribosylation is retained in the virion during infection. Phosphorylated on serine and threonine residues.

Its subcellular location is the virion. It is found in the host endoplasmic reticulum-Golgi intermediate compartment. The protein localises to the host Golgi apparatus. Packages the positive strand viral genome RNA into a helical ribonucleocapsid (RNP) and plays a fundamental role during virion assembly through its interactions with the viral genome and membrane protein M. Plays an important role in enhancing the efficiency of subgenomic viral RNA transcription as well as viral replication. This chain is Nucleoprotein, found in Rhinolophus macrotis (Big-eared horseshoe bat).